Consider the following 208-residue polypeptide: Small ribosomal subunit protein uS4 (208 aa).

The 64-residue stretch at 98-161 (LRLDNVVFRL…RKVVRISEAL (64 aa)) folds into the S4 RNA-binding domain.

It belongs to the universal ribosomal protein uS4 family. As to quaternary structure, part of the 30S ribosomal subunit. Contacts protein S5. The interaction surface between S4 and S5 is involved in control of translational fidelity.

Its function is as follows. One of the primary rRNA binding proteins, it binds directly to 16S rRNA where it nucleates assembly of the body of the 30S subunit. In terms of biological role, with S5 and S12 plays an important role in translational accuracy. The sequence is that of Small ribosomal subunit protein uS4 from Anaeromyxobacter sp. (strain Fw109-5).